Reading from the N-terminus, the 346-residue chain is Flap endonuclease 1 (346 aa).

The N-domain stretch occupies residues 1–102 (MGVTELGKLI…AEIEERRKTR (102 aa)). Mg(2+)-binding residues include Asp-31, Asp-84, Glu-156, Glu-158, Asp-177, Asp-179, and Asp-239. The segment at 120-261 (DVAKYAKRAV…KALKLIWEFG (142 aa)) is I-domain.

It belongs to the XPG/RAD2 endonuclease family. FEN1 subfamily. In terms of assembly, interacts with PCNA. PCNA stimulates the nuclease activity without altering cleavage specificity. Mg(2+) serves as cofactor.

Its function is as follows. Structure-specific nuclease with 5'-flap endonuclease and 5'-3' exonuclease activities involved in DNA replication and repair. During DNA replication, cleaves the 5'-overhanging flap structure that is generated by displacement synthesis when DNA polymerase encounters the 5'-end of a downstream Okazaki fragment. Binds the unpaired 3'-DNA end and kinks the DNA to facilitate 5' cleavage specificity. Cleaves one nucleotide into the double-stranded DNA from the junction in flap DNA, leaving a nick for ligation. Also involved in the base excision repair (BER) pathway. Acts as a genome stabilization factor that prevents flaps from equilibrating into structures that lead to duplications and deletions. Also possesses 5'-3' exonuclease activity on nicked or gapped double-stranded DNA. The chain is Flap endonuclease 1 from Pyrobaculum aerophilum (strain ATCC 51768 / DSM 7523 / JCM 9630 / CIP 104966 / NBRC 100827 / IM2).